The sequence spans 104 residues: L-rhamnose mutarotase (104 aa).

Position 18 (Tyr18) interacts with substrate. Residue His22 is the Proton donor of the active site. Residues Tyr41 and 76-77 contribute to the substrate site; that span reads WW.

This sequence belongs to the rhamnose mutarotase family. As to quaternary structure, homodimer.

The protein localises to the cytoplasm. The enzyme catalyses alpha-L-rhamnose = beta-L-rhamnose. The protein operates within carbohydrate metabolism; L-rhamnose metabolism. Functionally, involved in the anomeric conversion of L-rhamnose. The polypeptide is L-rhamnose mutarotase (Listeria monocytogenes serovar 1/2a (strain ATCC BAA-679 / EGD-e)).